We begin with the raw amino-acid sequence, 386 residues long: MEEQGIQCAPPPPAASQTGVPLVNLSHNCSAESHIYQDSIALPWKVLLVALLALITLATTLSNAFVIATVYRTRKLHTPANYLIASLAVTDLLVSILVMPVSTMYTVTGRWTLGQVVCDFWLSSDITCCTASIMHLCVIALDRYWAITDAVEYAAKRTPKRAAIMIALVWVFSISISLPPFFWRQAKAEEEVLTCLVNTDHVLYTVYSTGGAFYLPTLLLIALYGRIYVEARSRILKQTPNKTGKRLTRAQLITDSPGSTTSVTSINSRAPDLPSESGSPVYVNQVKVRVSDALLEKKKLMAARERKATKTLGIILGAFIVCWLPFFIISLVMPICKDACWFHMATLDFFNWLGYLNSLINPIIYTMSNEDFKQAFHKLIRFKCAG.

At 1–42 (MEEQGIQCAPPPPAASQTGVPLVNLSHNCSAESHIYQDSIAL) the chain is on the extracellular side. Residues Asn-24 and Asn-28 are each glycosylated (N-linked (GlcNAc...) asparagine). A helical membrane pass occupies residues 43-68 (PWKVLLVALLALITLATTLSNAFVIA). At 69-82 (TVYRTRKLHTPANY) the chain is on the cytoplasmic side. A helical transmembrane segment spans residues 83–107 (LIASLAVTDLLVSILVMPVSTMYTV). Over 108–115 (TGRWTLGQ) the chain is Extracellular. A helical membrane pass occupies residues 116 to 141 (VVCDFWLSSDITCCTASIMHLCVIAL). An intrachain disulfide couples Cys-118 to Cys-195. Residues Asp-125 and Thr-130 each contribute to the ergotamine site. The short motif at 142 to 144 (DRY) is the DRY motif; important for ligand-induced conformation changes and signaling element. Topologically, residues 142-161 (DRYWAITDAVEYAAKRTPKR) are cytoplasmic. The chain crosses the membrane as a helical span at residues 162–180 (AAIMIALVWVFSISISLPP). Topologically, residues 181 to 201 (FFWRQAKAEEEVLTCLVNTDH) are extracellular. An ergotamine-binding site is contributed by Val-197. The helical transmembrane segment at 202-225 (VLYTVYSTGGAFYLPTLLLIALYG) threads the bilayer. Residues 226 to 311 (RIYVEARSRI…AARERKATKT (86 aa)) are Cytoplasmic-facing. The segment covering 255–268 (DSPGSTTSVTSINS) has biased composition (polar residues). The interval 255 to 278 (DSPGSTTSVTSINSRAPDLPSESG) is disordered. A helical membrane pass occupies residues 312–333 (LGIILGAFIVCWLPFFIISLVM). Residues 334–343 (PICKDACWFH) lie on the Extracellular side of the membrane. The helical transmembrane segment at 344–366 (MATLDFFNWLGYLNSLINPIIYT) threads the bilayer. The NPxxY motif; important for ligand-induced conformation changes and signaling motif lies at 361–365 (NPIIY). Residues 367–386 (MSNEDFKQAFHKLIRFKCAG) lie on the Cytoplasmic side of the membrane. A lipid anchor (S-palmitoyl cysteine) is attached at Cys-384.

The protein belongs to the G-protein coupled receptor 1 family. In terms of assembly, homodimer. Heterodimer with HTR1D. Post-translationally, phosphorylated. Desensitization of the receptor may be mediated by its phosphorylation. Palmitoylated.

The protein resides in the cell membrane. Its function is as follows. G-protein coupled receptor for 5-hydroxytryptamine (serotonin). Also functions as a receptor for ergot alkaloid derivatives, various anxiolytic and antidepressant drugs and other psychoactive substances, such as lysergic acid diethylamide (LSD). Ligand binding causes a conformation change that triggers signaling via guanine nucleotide-binding proteins (G proteins) and modulates the activity of downstream effectors, such as adenylate cyclase. HTR1B is coupled to G(i)/G(o) G alpha proteins and mediates inhibitory neurotransmission by inhibiting adenylate cyclase activity. Arrestin family members inhibit signaling via G proteins and mediate activation of alternative signaling pathways. Regulates the release of 5-hydroxytryptamine, dopamine and acetylcholine in the brain, and thereby affects neural activity, nociceptive processing, pain perception, mood and behavior. Besides, plays a role in vasoconstriction of cerebral arteries. The chain is 5-hydroxytryptamine receptor 1B (HTR1B) from Cricetulus griseus (Chinese hamster).